Here is a 65-residue protein sequence, read N- to C-terminus: Neurotoxin BmK-M3 (65 aa).

Residues 2–64 (RDAYIAKPEN…VPIRVWGKCH (63 aa)) form the LCN-type CS-alpha/beta domain. Cystine bridges form between Cys-12-Cys-63, Cys-16-Cys-36, Cys-22-Cys-46, and Cys-26-Cys-48.

The protein belongs to the long (4 C-C) scorpion toxin superfamily. Sodium channel inhibitor family. Alpha subfamily. In terms of tissue distribution, expressed by the venom gland.

The protein localises to the secreted. Its function is as follows. Binds to sodium channels (Nav) and inhibits the inactivation of the activated channels, thereby blocking neuronal transmission. This is Neurotoxin BmK-M3 from Olivierus martensii (Manchurian scorpion).